Consider the following 150-residue polypeptide: Catabolic 3-dehydroquinase (150 aa).

Y24 (proton acceptor) is an active-site residue. Substrate contacts are provided by N75, H81, and D88. Residue H101 is the Proton donor of the active site. Residues 102 to 103 and R112 contribute to the substrate site; that span reads IS.

It belongs to the type-II 3-dehydroquinase family. As to quaternary structure, homododecamer. Adopts a ring-like structure, composed of an arrangement of two hexameric rings stacked on top of one another.

It catalyses the reaction 3-dehydroquinate = 3-dehydroshikimate + H2O. The protein operates within aromatic compound metabolism; 3,4-dihydroxybenzoate biosynthesis; 3,4-dihydroxybenzoate from 3-dehydroquinate: step 1/2. In terms of biological role, is involved in the catabolism of quinate. Allows the utilization of quinate as carbon source via the beta-ketoadipate pathway. This chain is Catabolic 3-dehydroquinase, found in Verticillium alfalfae (strain VaMs.102 / ATCC MYA-4576 / FGSC 10136) (Verticillium wilt of alfalfa).